The chain runs to 281 residues: Formamidopyrimidine-DNA glycosylase (281 aa).

Residue proline 2 is the Schiff-base intermediate with DNA of the active site. The active-site Proton donor is glutamate 3. The active-site Proton donor; for beta-elimination activity is lysine 58. DNA is bound by residues histidine 94, arginine 113, and arginine 156. The FPG-type; degenerate zinc-finger motif lies at 241–281 (AVYDRVGQPCPGCDCDVARTGGIERMVQSGRSTFFCGRRQR). Arginine 271 (proton donor; for delta-elimination activity) is an active-site residue.

Belongs to the FPG family. In terms of assembly, monomer. Requires Zn(2+) as cofactor.

It catalyses the reaction Hydrolysis of DNA containing ring-opened 7-methylguanine residues, releasing 2,6-diamino-4-hydroxy-5-(N-methyl)formamidopyrimidine.. The catalysed reaction is 2'-deoxyribonucleotide-(2'-deoxyribose 5'-phosphate)-2'-deoxyribonucleotide-DNA = a 3'-end 2'-deoxyribonucleotide-(2,3-dehydro-2,3-deoxyribose 5'-phosphate)-DNA + a 5'-end 5'-phospho-2'-deoxyribonucleoside-DNA + H(+). In terms of biological role, involved in base excision repair of DNA damaged by oxidation or by mutagenic agents. Acts as a DNA glycosylase that recognizes and removes damaged bases. Has a preference for oxidized purines, such as 7,8-dihydro-8-oxoguanine (8-oxoG). Has AP (apurinic/apyrimidinic) lyase activity and introduces nicks in the DNA strand. Cleaves the DNA backbone by beta-delta elimination to generate a single-strand break at the site of the removed base with both 3'- and 5'-phosphates. The sequence is that of Formamidopyrimidine-DNA glycosylase from Rhodospirillum rubrum (strain ATCC 11170 / ATH 1.1.1 / DSM 467 / LMG 4362 / NCIMB 8255 / S1).